A 231-amino-acid polypeptide reads, in one-letter code: Isoprenyl transferase (231 aa).

The active site involves aspartate 14. Position 14 (aspartate 14) interacts with Mg(2+). Residues glycine 15 to arginine 18, tryptophan 19, arginine 27, histidine 31, and serine 59 to glutamate 61 each bind substrate. The active-site Proton acceptor is asparagine 62. Residues tryptophan 63, arginine 65, arginine 176, and arginine 182–serine 184 each bind substrate. Position 195 (glutamate 195) interacts with Mg(2+).

It belongs to the UPP synthase family. In terms of assembly, homodimer. Mg(2+) is required as a cofactor.

In terms of biological role, catalyzes the condensation of isopentenyl diphosphate (IPP) with allylic pyrophosphates generating different type of terpenoids. In Aquifex aeolicus (strain VF5), this protein is Isoprenyl transferase.